We begin with the raw amino-acid sequence, 489 residues long: MTFRNCVAVDLGASSGRVMLARYERECRSLTLREIHRFNNGLHSQNGYVTWDVDSLESAIRLGLNKVCEEGIRIDSIGIDTWGVDFVLLDQQGQRVGLPVAYRDSRTNGLMAQAQQQLGKRDIYQRSGIQFLPFNTLYQLRALTEQQPELIPHIAHALLMPDYFSYRLTGKMNWEYTNATTTQLVNINSDDWDESLLAWSGANKAWFGRPTHPGNVIGHWICPQGNEIPVVAVASHDTASAVIASPLNGSRAAYLSSGTWSLMGFESQTPFTNDTALAANITNEGGAEGRYRVLKNIMGLWLLQRVLQERQINDLPALISATQALPACRFIINPNDDRFINPETMCSEIQAACRETAQPIPESDAELARCIFDSLALLYADVLHELAQLRGEDFSQLHIVGGGCQNTLLNQLCADACGIRVIAGPVEASTLGNIGIQLMTLDELNNVDDFRQVVSTTANLTTFTPNPDSEIAHYVARIHSTRQTKELCA.

13–17 contacts ATP; that stretch reads ASSGR. An intrachain disulfide couples C68 to C222. Substrate contacts are provided by residues G83 and 236-238; that span reads HDT. The active-site Proton acceptor is D237. T259 contributes to the ATP binding site. N296 provides a ligand contact to substrate. Q304 provides a ligand contact to ATP. The cysteines at positions 353 and 370 are disulfide-linked. G402 contacts ATP. C413 and C417 form a disulfide bridge.

The protein belongs to the rhamnulokinase family. As to quaternary structure, monomer. Requires Mg(2+) as cofactor.

The enzyme catalyses L-rhamnulose + ATP = L-rhamnulose 1-phosphate + ADP + H(+). The protein operates within carbohydrate degradation; L-rhamnose degradation; glycerone phosphate from L-rhamnose: step 2/3. Involved in the catabolism of L-rhamnose (6-deoxy-L-mannose). Catalyzes the transfer of the gamma-phosphate group from ATP to the 1-hydroxyl group of L-rhamnulose to yield L-rhamnulose 1-phosphate. This Escherichia coli O157:H7 protein is Rhamnulokinase.